The primary structure comprises 281 residues: Nucleotide-binding protein MADE_1004170 (281 aa).

Residue 8–15 participates in ATP binding; the sequence is GRSGSGKS. Position 56-59 (56-59) interacts with GTP; that stretch reads DVRN.

This sequence belongs to the RapZ-like family.

Displays ATPase and GTPase activities. This is Nucleotide-binding protein MADE_1004170 from Alteromonas mediterranea (strain DSM 17117 / CIP 110805 / LMG 28347 / Deep ecotype).